The sequence spans 336 residues: Histidinol-phosphate aminotransferase (336 aa).

Lysine 204 is modified (N6-(pyridoxal phosphate)lysine).

Belongs to the class-II pyridoxal-phosphate-dependent aminotransferase family. Histidinol-phosphate aminotransferase subfamily. It depends on pyridoxal 5'-phosphate as a cofactor.

It catalyses the reaction L-histidinol phosphate + 2-oxoglutarate = 3-(imidazol-4-yl)-2-oxopropyl phosphate + L-glutamate. It functions in the pathway amino-acid biosynthesis; L-histidine biosynthesis; L-histidine from 5-phospho-alpha-D-ribose 1-diphosphate: step 7/9. This is Histidinol-phosphate aminotransferase from Thermococcus kodakarensis (strain ATCC BAA-918 / JCM 12380 / KOD1) (Pyrococcus kodakaraensis (strain KOD1)).